A 327-amino-acid polypeptide reads, in one-letter code: MAKIYTDKDASLEPLRGKTIAVIGYGIQGRAQALNLRDSGLKVIVGLRKGGNSWNVAASEGFEVYEVGEAVSRADVVMVLIPDMEQPKVWQSQIAPHLREGAVVDFAHGFNIHYGLIKPPKNVDVVMVAPKAPGRAVREEFLAGRGVPALVAVHQNYSGSALKYALAIAKGIGATRAGVIETTFAEETETDLIGEQTVLVGGLMELIKRGFEVLVEMGYQPEVAYFEVLNEAKLIMDLIWQRGIYGMLNGVSDTAKYGGLTVGPKIIDEEVKSKMKAAALRVKSGEFAKEWVEEYARGSPNLKRLMESVKEHPIEKVGAEMRKLLFG.

In terms of domain architecture, KARI N-terminal Rossmann spans 2–182 (AKIYTDKDAS…GATRAGVIET (181 aa)). Residues 25 to 28 (YGIQ), Arg48, Ser53, and 83 to 86 (DMEQ) each bind NADP(+). The active site involves His108. Residue Gly134 participates in NADP(+) binding. The KARI C-terminal knotted domain occupies 183–327 (TFAEETETDL…GAEMRKLLFG (145 aa)). Mg(2+)-binding residues include Asp191, Glu195, Glu227, and Glu231. Ser252 contacts substrate.

This sequence belongs to the ketol-acid reductoisomerase family. It depends on Mg(2+) as a cofactor.

The catalysed reaction is (2R)-2,3-dihydroxy-3-methylbutanoate + NADP(+) = (2S)-2-acetolactate + NADPH + H(+). The enzyme catalyses (2R,3R)-2,3-dihydroxy-3-methylpentanoate + NADP(+) = (S)-2-ethyl-2-hydroxy-3-oxobutanoate + NADPH + H(+). It functions in the pathway amino-acid biosynthesis; L-isoleucine biosynthesis; L-isoleucine from 2-oxobutanoate: step 2/4. It participates in amino-acid biosynthesis; L-valine biosynthesis; L-valine from pyruvate: step 2/4. Its function is as follows. Involved in the biosynthesis of branched-chain amino acids (BCAA). Catalyzes an alkyl-migration followed by a ketol-acid reduction of (S)-2-acetolactate (S2AL) to yield (R)-2,3-dihydroxy-isovalerate. In the isomerase reaction, S2AL is rearranged via a Mg-dependent methyl migration to produce 3-hydroxy-3-methyl-2-ketobutyrate (HMKB). In the reductase reaction, this 2-ketoacid undergoes a metal-dependent reduction by NADPH to yield (R)-2,3-dihydroxy-isovalerate. In Pyrobaculum neutrophilum (strain DSM 2338 / JCM 9278 / NBRC 100436 / V24Sta) (Thermoproteus neutrophilus), this protein is Ketol-acid reductoisomerase (NADP(+)).